The sequence spans 171 residues: Large ribosomal subunit protein bL9 (171 aa).

It belongs to the bacterial ribosomal protein bL9 family.

Its function is as follows. Binds to the 23S rRNA. In Rickettsia prowazekii (strain Madrid E), this protein is Large ribosomal subunit protein bL9.